The sequence spans 133 residues: Small ribosomal subunit protein uS9 (133 aa).

The interval 102-133 (KPKGLLTRDPREVERKKYGLKKARRAPQFSKR) is disordered. Positions 107–118 (LTRDPREVERKK) are enriched in basic and acidic residues. Basic residues predominate over residues 119 to 133 (YGLKKARRAPQFSKR).

The protein belongs to the universal ribosomal protein uS9 family.

The chain is Small ribosomal subunit protein uS9 from Deinococcus deserti (strain DSM 17065 / CIP 109153 / LMG 22923 / VCD115).